The chain runs to 213 residues: Orotate phosphoribosyltransferase (213 aa).

5-phospho-alpha-D-ribose 1-diphosphate is bound at residue Lys26. 34-35 (FF) contacts orotate. Residues 72–73 (YK), Arg99, Lys100, Lys103, His105, and 124–132 (DDVITAGTA) contribute to the 5-phospho-alpha-D-ribose 1-diphosphate site. Residues Thr128 and Arg156 each coordinate orotate.

Belongs to the purine/pyrimidine phosphoribosyltransferase family. PyrE subfamily. Homodimer. It depends on Mg(2+) as a cofactor.

It catalyses the reaction orotidine 5'-phosphate + diphosphate = orotate + 5-phospho-alpha-D-ribose 1-diphosphate. The protein operates within pyrimidine metabolism; UMP biosynthesis via de novo pathway; UMP from orotate: step 1/2. Functionally, catalyzes the transfer of a ribosyl phosphate group from 5-phosphoribose 1-diphosphate to orotate, leading to the formation of orotidine monophosphate (OMP). The sequence is that of Orotate phosphoribosyltransferase from Shigella flexneri serotype 5b (strain 8401).